The primary structure comprises 342 residues: MQNEYSQFEQRKRDHIELALMPANQSNELNPFDHFSLVHEALPDLDFKDISIQSIRFKKPVEKPFIISSMTAGHSNALEINSRLMEACSKTKWAMGVGSQRRELSDKQAAFEWAPLRRDFPMVSLFSNLGIAQLIDTPISAIQRLIDTLQAEALIIHCNPLQECIQPEGTTNFQGCWTALEALVKKIASPVIIKETGCGFSKNTLLRLNNIGVAAVDVSGVGGTHWGRIEGHRANKDPIRHRTADTFRNWGIDTLQSTRNAISLNPSFEVWGSGGVRNGLDAAKLFALGATTVGFAKPMLEAALDSTGQVLTQMNIIEYELKTAMFCTGSRVLDDLKEKACP.

11–12 (RK) is a binding site for substrate. FMN is bound by residues S68, 69-71 (SMT), S99, and N128. Substrate is bound at residue 99 to 101 (SQR). Residue Q162 coordinates substrate. E163 contributes to the Mg(2+) binding site. FMN-binding positions include K194, S219, T224, 275 to 277 (GVR), and 296 to 297 (AK).

This sequence belongs to the IPP isomerase type 2 family. In terms of assembly, homooctamer. Dimer of tetramers. FMN is required as a cofactor. NADPH serves as cofactor. Requires Mg(2+) as cofactor.

Its subcellular location is the cytoplasm. The enzyme catalyses isopentenyl diphosphate = dimethylallyl diphosphate. Its function is as follows. Involved in the biosynthesis of isoprenoids. Catalyzes the 1,3-allylic rearrangement of the homoallylic substrate isopentenyl (IPP) to its allylic isomer, dimethylallyl diphosphate (DMAPP). This chain is Isopentenyl-diphosphate delta-isomerase, found in Legionella pneumophila (strain Paris).